The primary structure comprises 407 residues: Queuine tRNA-ribosyltransferase-like protein (407 aa).

This sequence belongs to the queuine tRNA-ribosyltransferase family.

The sequence is that of Queuine tRNA-ribosyltransferase-like protein from Plasmodium falciparum (isolate 3D7).